Here is a 154-residue protein sequence, read N- to C-terminus: S-ribosylhomocysteine lyase (154 aa).

Positions 57, 61, and 124 each coordinate Fe cation.

This sequence belongs to the LuxS family. Homodimer. Fe cation serves as cofactor.

The catalysed reaction is S-(5-deoxy-D-ribos-5-yl)-L-homocysteine = (S)-4,5-dihydroxypentane-2,3-dione + L-homocysteine. Functionally, involved in the synthesis of autoinducer 2 (AI-2) which is secreted by bacteria and is used to communicate both the cell density and the metabolic potential of the environment. The regulation of gene expression in response to changes in cell density is called quorum sensing. Catalyzes the transformation of S-ribosylhomocysteine (RHC) to homocysteine (HC) and 4,5-dihydroxy-2,3-pentadione (DPD). This chain is S-ribosylhomocysteine lyase, found in Exiguobacterium sibiricum (strain DSM 17290 / CCUG 55495 / CIP 109462 / JCM 13490 / 255-15).